The chain runs to 471 residues: NADH-quinone oxidoreductase subunit N (471 aa).

A run of 14 helical transmembrane segments spans residues 6-26, 30-50, 70-90, 98-118, 123-143, 158-178, 198-218, 230-250, 264-284, 292-312, 320-340, 365-385, 400-420, and 438-458; these read FILPEIFISLSIMFLLLLGVY, SSNIVHNLAVGSLLITGILIF, LSSFMKILTILGGAFVLSIST, IFLIEYPVLILSSILGMMVMI, LMVFYIGLELQSLALYVLASF, FVLSALSSGLLLYGCSLVYGF, LTFGIVFILVGLAFKISAVPF, PTAVTLFFAIVPKVAALTVFI, WQPILIFLSIASMIFGAIAAI, LIAYSSIGHMGYALAGLSTGS, IVYMSIYLVMNLAFFSCLLML, LSLLAILFSLAGIPPLAGFFA, FLAIVGLLSTVIAAFYYLKII, and IWLKGSLTFSTLLILLYFIFP.

The protein belongs to the complex I subunit 2 family. As to quaternary structure, NDH-1 is composed of 14 different subunits. Subunits NuoA, H, J, K, L, M, N constitute the membrane sector of the complex.

Its subcellular location is the cell inner membrane. The catalysed reaction is a quinone + NADH + 5 H(+)(in) = a quinol + NAD(+) + 4 H(+)(out). Its function is as follows. NDH-1 shuttles electrons from NADH, via FMN and iron-sulfur (Fe-S) centers, to quinones in the respiratory chain. The immediate electron acceptor for the enzyme in this species is believed to be ubiquinone. Couples the redox reaction to proton translocation (for every two electrons transferred, four hydrogen ions are translocated across the cytoplasmic membrane), and thus conserves the redox energy in a proton gradient. The protein is NADH-quinone oxidoreductase subunit N of Pelagibacter ubique (strain HTCC1062).